The primary structure comprises 701 residues: uncharacterized protein (701 aa).

This is an uncharacterized protein from Saccharomyces cerevisiae (strain ATCC 204508 / S288c) (Baker's yeast).